A 1010-amino-acid chain; its full sequence is Phosphoenolpyruvate carboxylase (1010 aa).

Residues 1–18 are compositionally biased toward polar residues; that stretch reads MIMRSPETSGASMPQSTA. Disordered regions lie at residues 1-36 and 132-154; these read MIMR…PGAG and LRPS…PPLA. Active-site residues include His195 and Lys652. Residues 967-986 form a disordered region; the sequence is QNRQPPMSESPGTPEDRRTY.

Belongs to the PEPCase type 1 family. The cofactor is Mg(2+).

It carries out the reaction oxaloacetate + phosphate = phosphoenolpyruvate + hydrogencarbonate. Functionally, forms oxaloacetate, a four-carbon dicarboxylic acid source for the tricarboxylic acid cycle. This chain is Phosphoenolpyruvate carboxylase, found in Parasynechococcus marenigrum (strain WH8102).